The following is a 131-amino-acid chain: Prefoldin subunit beta (131 aa).

2 disordered regions span residues 19 to 41 and 112 to 131; these read LQET…RESE and LQGG…AGGA. The segment covering 20-35 has biased composition (low complexity); that stretch reads QETAQQVAQQKQQAET. Over residues 114 to 131 the composition is skewed to gly residues; sequence GGAGGGPMGPGGPGAGGA.

Belongs to the prefoldin subunit beta family. In terms of assembly, heterohexamer of two alpha and four beta subunits.

It localises to the cytoplasm. In terms of biological role, molecular chaperone capable of stabilizing a range of proteins. Seems to fulfill an ATP-independent, HSP70-like function in archaeal de novo protein folding. The chain is Prefoldin subunit beta from Natronomonas pharaonis (strain ATCC 35678 / DSM 2160 / CIP 103997 / JCM 8858 / NBRC 14720 / NCIMB 2260 / Gabara) (Halobacterium pharaonis).